Reading from the N-terminus, the 150-residue chain is MFEEMIVEKVRKEAERIAEKQGLEIFDIQYRRESRGWVLRVVIDNPVGYVSVRDCELFSRELERFLDREDLIEHSYTLEVSSPGLDRPLRGPKDYQRFTGKLAKIITKDGKTFIGRIESFVDGIVTISDEKGKHEIDIEDVRKANLEIEF.

Belongs to the RimP family.

It is found in the cytoplasm. Functionally, required for maturation of 30S ribosomal subunits. This is Ribosome maturation factor RimP from Thermotoga neapolitana (strain ATCC 49049 / DSM 4359 / NBRC 107923 / NS-E).